Consider the following 296-residue polypeptide: Bifunctional protein FolD (296 aa).

NADP(+)-binding positions include 168–170 (GRS), threonine 197, and valine 238.

This sequence belongs to the tetrahydrofolate dehydrogenase/cyclohydrolase family. Homodimer.

It carries out the reaction (6R)-5,10-methylene-5,6,7,8-tetrahydrofolate + NADP(+) = (6R)-5,10-methenyltetrahydrofolate + NADPH. The catalysed reaction is (6R)-5,10-methenyltetrahydrofolate + H2O = (6R)-10-formyltetrahydrofolate + H(+). It functions in the pathway one-carbon metabolism; tetrahydrofolate interconversion. In terms of biological role, catalyzes the oxidation of 5,10-methylenetetrahydrofolate to 5,10-methenyltetrahydrofolate and then the hydrolysis of 5,10-methenyltetrahydrofolate to 10-formyltetrahydrofolate. The chain is Bifunctional protein FolD from Desulfotalea psychrophila (strain LSv54 / DSM 12343).